The primary structure comprises 201 residues: Adenylyl-sulfate kinase (201 aa).

35 to 42 provides a ligand contact to ATP; that stretch reads GLSGSGKS. The active-site Phosphoserine intermediate is Ser-109.

Belongs to the APS kinase family.

The catalysed reaction is adenosine 5'-phosphosulfate + ATP = 3'-phosphoadenylyl sulfate + ADP + H(+). Its pathway is sulfur metabolism; hydrogen sulfide biosynthesis; sulfite from sulfate: step 2/3. Catalyzes the synthesis of activated sulfate. The protein is Adenylyl-sulfate kinase of Enterobacter sp. (strain 638).